The sequence spans 1108 residues: Lon protease homolog, mitochondrial (1108 aa).

The N-terminal 62 residues, 1 to 62 (MLRGQSLPWR…RAFSTSSIRR (62 aa)), are a transit peptide targeting the mitochondrion. Disordered stretches follow at residues 24–192 (PLLP…QKPS) and 299–318 (LPPG…PEKK). The segment covering 36 to 53 (RSNLSISRLSRSPSLSPR) has biased composition (low complexity). Composition is skewed to basic and acidic residues over residues 78 to 103 (EQKD…DSTG) and 119 to 146 (KVAG…KSDP). The segment covering 161 to 171 (SDTKSSASNGG) has biased composition (polar residues). Basic and acidic residues-rich tracts occupy residues 174–188 (DGGR…DRAL) and 309–318 (NTEDKAPEKK). The 253-residue stretch at 200–452 (VMAIPIAKRP…KALVVLKKEL (253 aa)) folds into the Lon N-terminal domain. 605-612 (GPPGVGKT) is an ATP binding site. Over residues 821–855 (DKALTDEGKAAQEESKKETEEGDPKDPPADPEKST) the composition is skewed to basic and acidic residues. The disordered stretch occupies residues 821–862 (DKALTDEGKAAQEESKKETEEGDPKDPPADPEKSTTETPRLA). Residues 895–1081 (TFPPGVTMGL…SEVFNILFAE (187 aa)) enclose the Lon proteolytic domain. Active-site residues include S987 and K1030.

Belongs to the peptidase S16 family. In terms of assembly, homohexamer or homoheptamer. Organized in a ring with a central cavity.

It is found in the mitochondrion matrix. The enzyme catalyses Hydrolysis of proteins in presence of ATP.. In terms of biological role, ATP-dependent serine protease that mediates the selective degradation of misfolded, unassembled or oxidatively damaged polypeptides as well as certain short-lived regulatory proteins in the mitochondrial matrix. May also have a chaperone function in the assembly of inner membrane protein complexes. Participates in the regulation of mitochondrial gene expression and in the maintenance of the integrity of the mitochondrial genome. Binds to mitochondrial DNA in a site-specific manner. In Aspergillus fumigatus (strain ATCC MYA-4609 / CBS 101355 / FGSC A1100 / Af293) (Neosartorya fumigata), this protein is Lon protease homolog, mitochondrial (pim1).